The following is a 442-amino-acid chain: tRNA-2-methylthio-N(6)-dimethylallyladenosine synthase (442 aa).

Positions 2-120 (KKVFIRTFGC…LPKMIVDKET (119 aa)) constitute an MTTase N-terminal domain. [4Fe-4S] cluster-binding residues include C11, C49, C83, C157, C161, and C164. Positions 143–375 (RVEGGAAFVS…NEVIEAETAR (233 aa)) constitute a Radical SAM core domain. The TRAM domain occupies 378 to 441 (QTMVGTVQRC…TFSLRGKVVE (64 aa)).

The protein belongs to the methylthiotransferase family. MiaB subfamily. As to quaternary structure, monomer. The cofactor is [4Fe-4S] cluster.

It is found in the cytoplasm. The enzyme catalyses N(6)-dimethylallyladenosine(37) in tRNA + (sulfur carrier)-SH + AH2 + 2 S-adenosyl-L-methionine = 2-methylsulfanyl-N(6)-dimethylallyladenosine(37) in tRNA + (sulfur carrier)-H + 5'-deoxyadenosine + L-methionine + A + S-adenosyl-L-homocysteine + 2 H(+). Functionally, catalyzes the methylthiolation of N6-(dimethylallyl)adenosine (i(6)A), leading to the formation of 2-methylthio-N6-(dimethylallyl)adenosine (ms(2)i(6)A) at position 37 in tRNAs that read codons beginning with uridine. The polypeptide is tRNA-2-methylthio-N(6)-dimethylallyladenosine synthase (Neisseria meningitidis serogroup B (strain ATCC BAA-335 / MC58)).